Consider the following 171-residue polypeptide: uncharacterized protein (171 aa).

The protein belongs to the HHV-5 UL128 protein family. Forms the envelope pentamer complex (PC) composed of gH, gL, UL128, UL130, and UL131A. The pentamer interacts with host NRP2.

It is found in the virion membrane. In terms of biological role, plays a role in viral entry into host cells. Forms a pentameric complex at the surface of the viral envelope together with gH, gL, UL130 and UL131. This complex is required for entry in epithelial, endothelial and myeloid host cells. Mechanistically, engages host receptor(s) including neurophilin 2/NRP2 to mediate infection. Additionally, monomeric UL128 may interfere with certain inflammatory cytokines to increase infection and dissemination by blocking monocytes migration. This is an uncharacterized protein from Human cytomegalovirus (strain AD169) (HHV-5).